Reading from the N-terminus, the 196-residue chain is HTH-type transcriptional regulator BetI (196 aa).

In terms of domain architecture, HTH tetR-type spans 8–68 (PVRREQLIRA…AAMRQILREL (61 aa)). A DNA-binding region (H-T-H motif) is located at residues 31 to 50 (TVATIAKKAGLSSGIVAHYF).

It participates in amine and polyamine biosynthesis; betaine biosynthesis via choline pathway [regulation]. Its function is as follows. Repressor involved in the biosynthesis of the osmoprotectant glycine betaine. It represses transcription of the choline transporter BetT and the genes of BetAB involved in the synthesis of glycine betaine. This chain is HTH-type transcriptional regulator BetI, found in Stenotrophomonas maltophilia (strain R551-3).